We begin with the raw amino-acid sequence, 1272 residues long: Protein diaphanous homolog 1 (1272 aa).

N-acetylmethionine is present on M1. Residues 1–12 (MEPPGGSLGPGR) are compositionally biased toward gly residues. The tract at residues 1–84 (MEPPGGSLGP…YGDDPTAQSL (84 aa)) is disordered. 3 positions are modified to phosphoserine: S7, S22, and S36. A compositionally biased stretch (basic and acidic residues) spans 44–65 (LMADELERFTSMRIKKEKEKPN). The span at 67–84 (AHRNSSASYGDDPTAQSL) shows a compositional bias: polar residues. The 366-residue stretch at 84–449 (LQDVSDEQVL…QIVLHKNGAD (366 aa)) folds into the GBD/FH3 domain. Residues 468–572 (MIDKTKVEKS…ASLSAAAITV (105 aa)) are a coiled coil. The disordered stretch occupies residues 573-755 (PPSVPSRAPV…GMPPPPPFGF (183 aa)). 3 stretches are compositionally biased toward pro residues: residues 574 to 589 (PSVP…PPLP), 596 to 622 (IPPP…PPLP), and 640 to 658 (SPPP…PPLP). The region spanning 583-764 (PPAPPLPGDS…FGVPAAPVLP (182 aa)) is the FH1 domain. Low complexity predominate over residues 659 to 674 (EGVGIPSPSSLPGGTA). Positions 675 to 753 (IPPPPPLPGS…GMGMPPPPPF (79 aa)) are enriched in pro residues. T768 carries the phosphothreonine modification. An FH2 domain is found at 769-1171 (PKKLYKPEVQ…MRRAKLAKEK (403 aa)). Residues 1039–1196 (DELAHVEKAS…IDMNAEGDET (158 aa)) adopt a coiled-coil conformation. An N6-acetyllysine mark is found at K1057 and K1103. A Phosphotyrosine modification is found at Y1121. A DAD domain is found at 1194-1222 (DETGVMDSLLEALQSGAAFRRKRGPRQAN). Phosphoserine occurs at positions 1251 and 1254.

This sequence belongs to the formin homology family. Diaphanous subfamily. In terms of assembly, homodimer. Interacts with the GTP-bound form of RHOA. Interacts with RHOC, PFY1, MAPRE1 and BAIAP2. Interacts with APC; acts as a scaffold protein for MAPRE1 and APC to stabilize microtubules and promote cell migration. Interacts with SCAI. Interacts with DCAF7, via FH2 domain. Interacts with NCDN. Interacts with OSBPL10, OSBPL2, VIM, TUBB and DYN1. In terms of processing, phosphorylation at Thr-768 is stimulated by cAMP and regulates stability, complex formation and mitochondrial movement. As to expression, expressed in brain, heart, placenta, lung, kidney, pancreas, liver, skeletal muscle and cochlea. Expressed in platelets.

The protein resides in the cell membrane. It is found in the cell projection. Its subcellular location is the ruffle membrane. The protein localises to the cytoplasm. It localises to the cytoskeleton. The protein resides in the microtubule organizing center. It is found in the centrosome. Its subcellular location is the spindle. The protein localises to the nucleus. Actin nucleation and elongation factor required for the assembly of F-actin structures, such as actin cables and stress fibers. Binds to the barbed end of the actin filament and slows down actin polymerization and depolymerization. Required for cytokinesis, and transcriptional activation of the serum response factor. DFR proteins couple Rho and Src tyrosine kinase during signaling and the regulation of actin dynamics. Functions as a scaffold protein for MAPRE1 and APC to stabilize microtubules and promote cell migration. Has neurite outgrowth promoting activity. Acts in a Rho-dependent manner to recruit PFY1 to the membrane. In hear cells, it may play a role in the regulation of actin polymerization in hair cells. The MEMO1-RHOA-DIAPH1 signaling pathway plays an important role in ERBB2-dependent stabilization of microtubules at the cell cortex. It controls the localization of APC and CLASP2 to the cell membrane, via the regulation of GSK3B activity. In turn, membrane-bound APC allows the localization of the MACF1 to the cell membrane, which is required for microtubule capture and stabilization. Plays a role in the regulation of cell morphology and cytoskeletal organization. Required in the control of cell shape. Plays a role in brain development. Also acts as an actin nucleation and elongation factor in the nucleus by promoting nuclear actin polymerization inside the nucleus to drive serum-dependent SRF-MRTFA activity. This is Protein diaphanous homolog 1 (DIAPH1) from Homo sapiens (Human).